The primary structure comprises 567 residues: Dynein, 70 kDa intermediate chain, flagellar outer arm (567 aa).

WD repeat units follow at residues 214–254, 261–302, 360–399, and 404–444; these read VPTS…GPVE, SHRD…ECVE, GHHGPIYGLRRNPFNSKYFLSIGDWTARVWVEDTAVKTPI, and YHPT…NEPT.

Belongs to the dynein intermediate chain family. In terms of assembly, consists of at least 3 heavy chains (alpha, beta and gamma), 2 intermediate chains and 8 light chains.

It localises to the cytoplasm. Its subcellular location is the cytoskeleton. It is found in the flagellum axoneme. Functionally, may play a role in regulating dynein heavy chain (DHC) activity. May function in holding IC78 to the DHC, or in stabilizing the entire dynein complex. The protein is Dynein, 70 kDa intermediate chain, flagellar outer arm (ODA6) of Chlamydomonas reinhardtii (Chlamydomonas smithii).